A 308-amino-acid polypeptide reads, in one-letter code: MKQVEIIDSHTGGEPTRLVLSGFPALAGATMADKRDALRERHDQWRRACLLEPRGSDVLVGALYCEPVSPDAACGVIFFNNTGYIGMCGHGTIGLIASLHCLGRIAPGAHKIDTPVGPVDAVLHEDGSVTLRNVPAYRYRRQAAVEVPGHGTVIGDIAWGGNWFFLVAEHGLSVRLDNVAALSAFSCATMQALEEQGITGADGARIDHVELFADDEQADSRNFVMCPGKAYDRSPCGTGTSAKLACLAADGKLAEGEQWVQAGITGSRFVGHYQREGDFIRPYITGRAHITARAMLLIDEQDPFAWGI.

Cys88 (proton acceptor) is an active-site residue. Substrate is bound by residues 89-90 (GH), His208, and Asp232. Cys236 (proton donor) is an active-site residue. A substrate-binding site is contributed by 237 to 238 (GT).

This sequence belongs to the proline racemase family.

The catalysed reaction is trans-4-hydroxy-L-proline = cis-4-hydroxy-D-proline. Its function is as follows. Catalyzes the epimerization of trans-4-hydroxy-L-proline (t4LHyp) to cis-4-hydroxy-D-proline (c4DHyp). Is likely involved in a degradation pathway that converts t4LHyp to alpha-ketoglutarate. Can also catalyze the epimerization of trans-3-hydroxy-L-proline (t3LHyp) to cis-3-hydroxy-D-proline (c3DHyp), albeit with 19-fold lower efficiency. Displays no proline racemase activity. This chain is 4-hydroxyproline 2-epimerase, found in Chromobacterium violaceum (strain ATCC 12472 / DSM 30191 / JCM 1249 / CCUG 213 / NBRC 12614 / NCIMB 9131 / NCTC 9757 / MK).